The sequence spans 522 residues: Mediator of RNA polymerase II transcription subunit 1.2 (522 aa).

Residues 13–40 (LLEQRKNQELNIEHIDEEMRLEQVRQAA) adopt a coiled-coil conformation.

The protein belongs to the Mediator complex subunit 1 family. Component of the Mediator complex.

Its subcellular location is the nucleus. Its function is as follows. Component of the Mediator complex, a coactivator involved in the regulated transcription of nearly all RNA polymerase II-dependent genes. Mediator functions as a bridge to convey information from gene-specific regulatory proteins to the basal RNA polymerase II transcription machinery. Mediator is recruited to promoters by direct interactions with regulatory proteins and serves as a scaffold for the assembly of a functional preinitiation complex with RNA polymerase II and the general transcription factors. The protein is Mediator of RNA polymerase II transcription subunit 1.2 (mdt-1.2) of Caenorhabditis elegans.